Reading from the N-terminus, the 1353-residue chain is Xanthine dehydrogenase 2 (1353 aa).

The 87-residue stretch at 7–93 (MEAIMYVNGV…GMHVISIEGV (87 aa)) folds into the 2Fe-2S ferredoxin-type domain. [2Fe-2S] cluster contacts are provided by Cys45, Cys50, Cys53, Cys75, Cys115, Cys118, Cys151, and Cys153. An FAD-binding PCMH-type domain is found at 249 to 434 (GGNEGITWYR…LSVFLPWTRP (186 aa)). Residues 277-284 (LLVGNTEV), Phe357, 367-371 (CIGGN), Asp380, Leu424, and Lys442 contribute to the FAD site. Mo-molybdopterin-binding residues include Gln788 and Phe819. Glu823 and Arg901 together coordinate substrate. Arg933 provides a ligand contact to Mo-molybdopterin. The substrate site is built by Phe935 and Thr1031. Ala1100 provides a ligand contact to Mo-molybdopterin. Glu1289 (proton acceptor) is an active-site residue.

The protein belongs to the xanthine dehydrogenase family. As to quaternary structure, homodimer. [2Fe-2S] cluster is required as a cofactor. Requires FAD as cofactor. The cofactor is Mo-molybdopterin. In terms of tissue distribution, expressed in roots, leaves, stems, flowers and siliques.

It catalyses the reaction xanthine + NAD(+) + H2O = urate + NADH + H(+). It carries out the reaction hypoxanthine + NAD(+) + H2O = xanthine + NADH + H(+). Key enzyme involved in purine catabolism. Catalyzes the oxidation of hypoxanthine to xanthine and the oxidation of xanthine to urate. Regulates the level of ureides and plays a role during plant growth and development and senescence. This Arabidopsis thaliana (Mouse-ear cress) protein is Xanthine dehydrogenase 2 (XDH2).